The sequence spans 436 residues: Septin-7 (436 aa).

At Ser-2 the chain carries N-acetylserine. Position 29 is a phosphotyrosine (Tyr-29). A Septin-type G domain is found at 46–315; it reads RGFEFTLMVV…ENYRSRKLAA (270 aa). An interaction with SEPTIN12 region spans residues 46 to 316; it reads RGFEFTLMVV…NYRSRKLAAV (271 aa). Residues 56–63 are G1 motif; that stretch reads GESGLGKS. GTP is bound at residue 56–63; that stretch reads GESGLGKS. Ser-76 is modified (phosphoserine). Residues Thr-89, Gly-115, and 194-202 each bind GTP; that span reads KADTLTPEE. Residues 112–115 are G3 motif; it reads DTPG. The interval 193-196 is G4 motif; sequence AKAD. Thr-227 bears the Phosphothreonine mark. The GTP site is built by Gly-249 and Arg-264. Positions 331 to 436 form a coiled coil; it reads TKSPLAQMEE…EKNKKKGKIF (106 aa). Position 333 is a phosphoserine (Ser-333). An N6-acetyllysine modification is found at Lys-372. Positions 377–409 are enriched in basic and acidic residues; that stretch reads ELQRRHEQMKKNLEAQHKELEEKRRQFEEEKAN. Residues 377–436 form a disordered region; sequence ELQRRHEQMKKNLEAQHKELEEKRRQFEEEKANWEAQQRILEQQNSSRTLEKNKKKGKIF. Ser-423 carries the post-translational modification Phosphoserine. Thr-425 carries the post-translational modification Phosphothreonine.

This sequence belongs to the TRAFAC class TrmE-Era-EngA-EngB-Septin-like GTPase superfamily. Septin GTPase family. Septins polymerize into heterooligomeric protein complexes that form filaments, and associate with cellular membranes, actin filaments and microtubules. GTPase activity is required for filament formation. Filaments are assembled from asymmetrical heterotrimers, composed of SEPTIN2, SEPTIN6 and SEPTIN7 that associate head-to-head to form a hexameric unit. Within the trimer, directly interacts with SEPTIN6, while interaction with SEPTIN2 seems indirect. In the absence of SEPTIN6, forms homodimers. Interacts directly with CENPE and links CENPE to septin filaments composed of SEPTIN2, SEPTIN6 and SEPTIN7. Interacts with SEPTIN8, SEPTIN9 and SEPTIN11. Component of a septin core octameric complex consisting of SEPTIN12, SEPTIN7, SEPTIN6 and SEPTIN2 or SEPTIN4 in the order 12-7-6-2-2-6-7-12 or 12-7-6-4-4-6-7-12 and located in the sperm annulus; the SEPTIN12:SEPTIN7 association is mediated by the respective GTP-binding domains. Interacts with SEPTIN2 and SEPTIN5. In terms of tissue distribution, expressed in the cerebral cortex (at protein level).

It localises to the cytoplasm. It is found in the chromosome. The protein resides in the centromere. Its subcellular location is the kinetochore. The protein localises to the cytoskeleton. It localises to the spindle. It is found in the cleavage furrow. The protein resides in the midbody. Its subcellular location is the cilium axoneme. The protein localises to the cell projection. It localises to the cilium. It is found in the flagellum. Filament-forming cytoskeletal GTPase. Required for normal organization of the actin cytoskeleton. Required for normal progress through mitosis. Involved in cytokinesis. Required for normal association of CENPE with the kinetochore. Plays a role in ciliogenesis and collective cell movements. Forms a filamentous structure with SEPTIN12, SEPTIN6, SEPTIN2 and probably SEPTIN4 at the sperm annulus which is required for the structural integrity and motility of the sperm tail during postmeiotic differentiation. This chain is Septin-7, found in Mus musculus (Mouse).